Reading from the N-terminus, the 820-residue chain is Leucine--tRNA ligase (820 aa).

The short motif at 42–52 (PYPSGDLHMGH) is the 'HIGH' region element. Residues 576-580 (KMSKS) carry the 'KMSKS' region motif. K579 provides a ligand contact to ATP.

Belongs to the class-I aminoacyl-tRNA synthetase family.

Its subcellular location is the cytoplasm. It catalyses the reaction tRNA(Leu) + L-leucine + ATP = L-leucyl-tRNA(Leu) + AMP + diphosphate. The chain is Leucine--tRNA ligase from Coxiella burnetii (strain RSA 493 / Nine Mile phase I).